The following is a 217-amino-acid chain: Regulator of G-protein signaling 19 (217 aa).

Residues 1 to 29 form a disordered region; sequence MPTPHEAEKQITGPEEADRPPSMSSHDTA. 2 positions are modified to phosphoserine: S24 and S97. One can recognise an RGS domain in the interval 90 to 206; sequence SFDKLMHSPA…LSSPTYRALL (117 aa). S151 is modified (phosphoserine; by MAPK1 and MAPK3). The tract at residues 207-217 is interaction with GIPC; that stretch reads LQGPSQSSSEA.

Interacts with GIPC PDZ domain. Interacts with GNAO1. Post-translationally, fatty acylated. Heavily palmitoylated in the cysteine string motif. In terms of processing, phosphorylated, mainly on serine residues. As to expression, highest expression in lung. Placenta, liver and heart also express high levels of GAIP.

It is found in the membrane. Its function is as follows. Inhibits signal transduction by increasing the GTPase activity of G protein alpha subunits thereby driving them into their inactive GDP-bound form. Binds to G-alpha subfamily 1 members, with the order G(i)a3 &gt; G(i)a1 &gt; G(o)a &gt;&gt; G(z)a/G(i)a2. Activity on G(z)-alpha is inhibited by phosphorylation and palmitoylation of the G-protein. The sequence is that of Regulator of G-protein signaling 19 (RGS19) from Homo sapiens (Human).